Reading from the N-terminus, the 222-residue chain is Sortase A (222 aa).

The Cytoplasmic portion of the chain corresponds to 1–7; it reads MLKKTIA. A helical transmembrane segment spans residues 8–28; sequence IIILIIGLLLIFSPFIKNGIV. The Extracellular portion of the chain corresponds to 29–222; the sequence is KYMSGHETIE…ELENKYFPSK (194 aa). Residue histidine 127 is the Proton donor/acceptor of the active site. Residue cysteine 188 is the Acyl-thioester intermediate of the active site.

It belongs to the bacterial sortase family. Class A subfamily.

The protein localises to the cell membrane. With respect to regulation, activity is enhanced by Zn(2+) and strongly enhanced by Ca(2+). Inhibited by chalcone, a precursor of several flavonoids, which blocks the SrtA active site. In terms of biological role, transpeptidase that anchors surface proteins to the cell wall. Recognizes and modifies its substrate by proteolytic cleavage of a C-terminal sorting signal. Following cleavage, a covalent intermediate is formed via a thioester bond between the sortase and its substrate, which is then transferred and covalently attached to the cell wall. This sortase recognizes a Leu-Pro-x-Thr-Gly (LPXTG) motif, which is cleaved by the sortase between the threonine and glycine residues. Involved in pathogenesis. May regulate the rate of synthesis and/or the stability of a subset of LPXTG proteins. Not involved in cell wall-anchoring of Hbp2 (SvpA) or Hbp1. The polypeptide is Sortase A (Listeria monocytogenes serovar 1/2a (strain ATCC BAA-679 / EGD-e)).